The chain runs to 357 residues: MTVKKNIVIAGGGTGGHIYPGIAIARALQKLDPSIEVHFVGTARGLESKIVPREGFPLHLIESGQLNVKSPIQKMKTLLKIPVGLWQSIRLLGQLKPLYVIGVGGYASGPFVLAASIIGFNTAVWEPNAMPGMANRILSRFVDKCFVVFNEAKKHLKGDSIIQTGMPVRAEIEAAVHDSSENQKFHLLAFGGSQGSRIINNCLSDAVLGGGDWVKDLSVVHQLGSADFQAVSEKYKNAPCEVQPFEFIYDMAKYYQWADIIVCRGGASSIAEAAAFGIIPIIVPLPAADNHQQKNAESLVEKNAGRMILQKDLTPERLISEVQSLRADKALREQMVRNIKNFYIPQSATVIAKEILQ.

UDP-N-acetyl-alpha-D-glucosamine-binding positions include 14–16, Asn-128, Arg-169, Ser-193, Ile-248, and Gln-292; that span reads TGG.

Belongs to the glycosyltransferase 28 family. MurG subfamily.

It is found in the cell inner membrane. The catalysed reaction is di-trans,octa-cis-undecaprenyl diphospho-N-acetyl-alpha-D-muramoyl-L-alanyl-D-glutamyl-meso-2,6-diaminopimeloyl-D-alanyl-D-alanine + UDP-N-acetyl-alpha-D-glucosamine = di-trans,octa-cis-undecaprenyl diphospho-[N-acetyl-alpha-D-glucosaminyl-(1-&gt;4)]-N-acetyl-alpha-D-muramoyl-L-alanyl-D-glutamyl-meso-2,6-diaminopimeloyl-D-alanyl-D-alanine + UDP + H(+). The protein operates within cell wall biogenesis; peptidoglycan biosynthesis. Its function is as follows. Cell wall formation. Catalyzes the transfer of a GlcNAc subunit on undecaprenyl-pyrophosphoryl-MurNAc-pentapeptide (lipid intermediate I) to form undecaprenyl-pyrophosphoryl-MurNAc-(pentapeptide)GlcNAc (lipid intermediate II). The chain is UDP-N-acetylglucosamine--N-acetylmuramyl-(pentapeptide) pyrophosphoryl-undecaprenol N-acetylglucosamine transferase from Bdellovibrio bacteriovorus (strain ATCC 15356 / DSM 50701 / NCIMB 9529 / HD100).